We begin with the raw amino-acid sequence, 225 residues long: ATP-dependent dethiobiotin synthetase BioD 1 (225 aa).

Mg(2+) is bound by residues glutamate 13 and threonine 17. Residue 13–18 coordinates ATP; it reads EVGKTV. The active site involves lysine 38. Serine 42 contacts substrate. Mg(2+) is bound by residues aspartate 55 and glutamate 116. ATP is bound by residues aspartate 55, 116–119, and 176–177; these read EGAG and ND. Residue tyrosine 188 coordinates substrate. ATP contacts are provided by residues 205–207 and glutamate 212; that span reads PWL.

This sequence belongs to the dethiobiotin synthetase family. As to quaternary structure, homodimer. Mg(2+) is required as a cofactor.

Its subcellular location is the cytoplasm. It catalyses the reaction (7R,8S)-7,8-diammoniononanoate + CO2 + ATP = (4R,5S)-dethiobiotin + ADP + phosphate + 3 H(+). The protein operates within cofactor biosynthesis; biotin biosynthesis; biotin from 7,8-diaminononanoate: step 1/2. Functionally, catalyzes a mechanistically unusual reaction, the ATP-dependent insertion of CO2 between the N7 and N8 nitrogen atoms of 7,8-diaminopelargonic acid (DAPA, also called 7,8-diammoniononanoate) to form a ureido ring. Only CTP can partially replace ATP while diaminobiotin is only 37% as effective as 7,8-diaminopelargonic acid. In another study both CTP and GTP (but not ITP, TTP or UTP) can partially replace ATP. The chain is ATP-dependent dethiobiotin synthetase BioD 1 from Escherichia coli (strain K12).